Reading from the N-terminus, the 170-residue chain is Alpha-crystallin A chain (170 aa).

Met-1 is modified (N-acetylmethionine). Residues 1–63 are required for complex formation with BFSP1 and BFSP2; that stretch reads MDVTIQHPWF…RTALDSGISE (63 aa). Gln-6 bears the Deamidated glutamine; partial mark. Ser-45 carries the phosphoserine modification. Gln-50 carries the post-translational modification Deamidated glutamine; partial. The region spanning 52–161 is the sHSP domain; the sequence is LFRTALDSGI…GERTIPVSRE (110 aa). Position 99 is an N6-acetyllysine (Lys-99). His-100 provides a ligand contact to Zn(2+). Position 101 is a deamidated asparagine; partial (Asn-101). Zn(2+) contacts are provided by Glu-102, His-107, and His-151. The segment at 144–170 is disordered; the sequence is PKLVDPSHGERTIPVSREEKPSSAPSS. Residues 148–164 are compositionally biased toward basic and acidic residues; the sequence is DPSHGERTIPVSREEKP. Ser-159 carries O-linked (GlcNAc) serine glycosylation.

This sequence belongs to the small heat shock protein (HSP20) family. In terms of assembly, heteromer composed of three CRYAA and one CRYAB subunits. Inter-subunit bridging via zinc ions enhances stability, which is crucial as there is no protein turn over in the lens. Can also form homodimers and homotetramers (dimers of dimers) which serve as the building blocks of homooligomers. Within homooligomers, the zinc-binding motif is created from residues of 3 different molecules. His-100 and Glu-102 from one molecule are ligands of the zinc ion, and His-107 and His-151 residues from additional molecules complete the site with tetrahedral coordination geometry. Part of a complex required for lens intermediate filament formation composed of BFSP1, BFSP2 and CRYAA. Post-translationally, acetylation at Lys-99 may increase chaperone activity. In terms of processing, undergoes age-dependent proteolytical cleavage at the C-terminus.

The protein resides in the cytoplasm. Its subcellular location is the nucleus. In terms of biological role, contributes to the transparency and refractive index of the lens. Acts as a chaperone, preventing aggregation of various proteins under a wide range of stress conditions. Required for the correct formation of lens intermediate filaments as part of a complex composed of BFSP1, BFSP2 and CRYAA. This is Alpha-crystallin A chain (CRYAA) from Tamandua mexicana (Northern Tamandua).